The primary structure comprises 1285 residues: Protein cramped-like (1285 aa).

The segment at Met-1 to Glu-161 is disordered. Over residues Glu-13–Asp-24 the composition is skewed to basic and acidic residues. Pro residues predominate over residues Pro-57–Gly-71. The segment covering Gly-100–Gly-116 has biased composition (gly residues). 2 stretches are compositionally biased toward low complexity: residues Gly-117 to Gly-126 and Gly-134 to Gly-147. Over residues Pro-148 to Glu-161 the composition is skewed to basic and acidic residues. Positions Arg-158 to Thr-221 constitute an SANT domain. The residue at position 304 (Ser-304) is a Phosphoserine. Disordered regions lie at residues Gly-456 to Leu-519, Arg-579 to Ser-673, Asn-766 to Asp-843, Ser-994 to Leu-1055, Gly-1068 to Gly-1107, and Pro-1132 to Asp-1172. A compositionally biased stretch (low complexity) spans Ala-479–Pro-503. Basic and acidic residues-rich tracts occupy residues Ala-505–Leu-519 and Arg-579–Pro-589. Polar residues-rich tracts occupy residues Glu-654–Thr-664 and Asn-766–Pro-784. Low complexity predominate over residues Asn-792–Ser-803. Over residues Thr-804–Ser-813 the composition is skewed to polar residues. Over residues Gly-833–Asp-843 the composition is skewed to low complexity. Polar residues predominate over residues Ser-994–Gln-1012. 2 stretches are compositionally biased toward low complexity: residues Leu-1069–Pro-1086 and Ser-1141–Pro-1156. Ser-1284 is subject to Phosphoserine.

Belongs to the cramped family.

The protein localises to the nucleus. This Mus musculus (Mouse) protein is Protein cramped-like.